Reading from the N-terminus, the 406-residue chain is Probable 26S proteasome regulatory subunit 10B (406 aa).

Position 191 to 198 (191 to 198) interacts with ATP; the sequence is GPPGTGKT.

This sequence belongs to the AAA ATPase family.

It localises to the cytoplasm. It is found in the nucleus. In terms of biological role, the 26S proteasome is involved in the ATP-dependent degradation of ubiquitinated proteins. The regulatory (or ATPase) complex confers ATP dependency and substrate specificity to the 26S complex. The chain is Probable 26S proteasome regulatory subunit 10B (rpt-4) from Caenorhabditis elegans.